Reading from the N-terminus, the 325-residue chain is Mitochondrial citrate transporter C (325 aa).

Solcar repeat units lie at residues 15 to 105 (ASPA…YKQM), 117 to 208 (KATF…LKAF), and 221 to 310 (LPSY…LKGK). 6 helical membrane passes run 21–41 (LIAG…LDTI), 82–102 (GAVL…YESY), 121–141 (LAGL…MEVV), 187–207 (TALR…ELKA), 221–241 (LPSY…PFSN), and 282–303 (FYKG…TFTV).

This sequence belongs to the mitochondrial carrier (TC 2.A.29) family.

Its subcellular location is the mitochondrion inner membrane. Mitochondrial transporter that does not mediate citrate export from mitochondria to cytoplasm. Its exact function has still to be determined. The sequence is that of Mitochondrial citrate transporter C from Aspergillus niger (strain ATCC 1015 / CBS 113.46 / FGSC A1144 / LSHB Ac4 / NCTC 3858a / NRRL 328 / USDA 3528.7).